Consider the following 266-residue polypeptide: NADP-dependent mannitol dehydrogenase (266 aa).

NADP(+) is bound by residues serine 53, asparagine 107, and lysine 140. Serine 159 acts as the Proton donor in catalysis. Tyrosine 174, lysine 178, isoleucine 206, and threonine 208 together coordinate NADP(+). The Proton acceptor role is filled by tyrosine 174. The active-site Lowers pKa of active site Tyr is lysine 178.

The protein belongs to the short-chain dehydrogenases/reductases (SDR) family. Homotetramer.

The enzyme catalyses D-mannitol + NADP(+) = D-fructose + NADPH + H(+). D-mannitol 2-dehydrogenase which is not necessary for D-mannitol catabolism. D-mannitol metabolism occurs via at least two different routes involving mannitol dehydrogenase (MDH) or mannitol 1-phosphate dehydrogenase, and the exact physiological role of mannitol dehydrogenases remains unclear. The chain is NADP-dependent mannitol dehydrogenase from Hypocrea jecorina (strain ATCC 56765 / BCRC 32924 / NRRL 11460 / Rut C-30) (Trichoderma reesei).